The chain runs to 497 residues: MTLMKKFYVTTPIYYVNDVPHLGHAYTTIAADTIARYYRLRDYDVFFLTGTDEHGLKIQKKAEELGISPKELVDRNAERFKKLWEFLKIEYTKFIRTTDPYHVKFVQKVFEECYKRGDIYLGEYEGWYCVGCEEFKSEAELAEDHTCPIHQKKCEYIKEPSYFFRLSKYQDKLLELYEKNPEFIQPDYRRNEIISFVKQGLKDLSVTRPRSRVKWGIPVPFDPEHTIYVWFDALFNYISALEDKVEIYWPADLHLVGKDILRFHTVYWPAFLMSLGYELPKKVFAHGWWTVEGKKMSKTLGNVVDPYEVVQEYGLDEVRYFLLREVPFGQDGDFSKKAILNRINGELANEIGNLYSRVVNMAHKFLGGEVSGARDEEYAKIAQESIKNYENYMEKVNFYKAIEEILKFTSYLNKYVDEKQPWALNKERKKEELQKVLYALVDGLFVLTHLLYPITPNKMKEALQMLGEKEFLKELKPYSKNTYKLGERKILFPKREG.

The 'HIGH' region signature appears at 14–24 (YYVNDVPHLGH). Positions 129, 132, 147, and 150 each coordinate Zn(2+). The short motif at 295–299 (KMSKT) is the 'KMSKS' region element. K298 lines the ATP pocket.

This sequence belongs to the class-I aminoacyl-tRNA synthetase family. MetG type 2A subfamily. Monomer. Zn(2+) is required as a cofactor.

It is found in the cytoplasm. It catalyses the reaction tRNA(Met) + L-methionine + ATP = L-methionyl-tRNA(Met) + AMP + diphosphate. Its function is as follows. Is required not only for elongation of protein synthesis but also for the initiation of all mRNA translation through initiator tRNA(fMet) aminoacylation. This Aquifex aeolicus (strain VF5) protein is Methionine--tRNA ligase (metG).